Here is a 350-residue protein sequence, read N- to C-terminus: Ion-translocating oxidoreductase complex subunit D (350 aa).

The next 3 helical transmembrane spans lie at 20–39 (IMMLVTLATVPGIAVQWYFF), 89–109 (IPPLAPWWMVVLGTAFAVIIA), and 123–143 (PAMIGYVVLLISFPVQMTNWL). At T187 the chain carries FMN phosphoryl threonine. 5 consecutive transmembrane segments (helical) span residues 215-235 (LAGLGWQWVNLAYLAGGLFLL), 244-264 (IPVSFLVTLAVCSTLGWLIAP), 267-287 (FLSPLMHLLSGATMLGAFFIL), 301-321 (LVFGALVGLLVWLIRSFGGYP), and 322-342 (DGVAFAVLLANITVPLIDYYT).

This sequence belongs to the NqrB/RnfD family. As to quaternary structure, the complex is composed of six subunits: RnfA, RnfB, RnfC, RnfD, RnfE and RnfG. The cofactor is FMN.

It is found in the cell inner membrane. Its function is as follows. Part of a membrane-bound complex that couples electron transfer with translocation of ions across the membrane. This chain is Ion-translocating oxidoreductase complex subunit D, found in Cronobacter sakazakii (strain ATCC BAA-894) (Enterobacter sakazakii).